Reading from the N-terminus, the 214-residue chain is Neuromodulin (214 aa).

The disordered stretch occupies residues 1 to 214; the sequence is MLCCMRRTKQ…EEAKPDQENA (214 aa). 2 S-palmitoyl cysteine lipidation sites follow: C3 and C4. Composition is skewed to basic and acidic residues over residues 9–33, 52–88, and 95–122; these read KQVE…DKAH, MKDD…KTEE, and LEVK…KDTP. Positions 32–61 constitute an IQ domain; the sequence is AHKAATKIQASFRGHIIRKKMKDDKKDDNS. Low complexity predominate over residues 124–133; the sequence is EENQASAESE. 3 stretches are compositionally biased toward basic and acidic residues: residues 150 to 160, 168 to 193, and 205 to 214; these read QAKEESKKADV, ASEK…EIKA, and EEAKPDQENA.

It belongs to the neuromodulin family. In terms of assembly, binds calmodulin with a greater affinity in the absence of Ca(2+) than in its presence. Palmitoylated. Palmitoylation is essential for plasma membrane association.

The protein localises to the cell membrane. The protein resides in the cell projection. Its subcellular location is the growth cone membrane. It is found in the synapse. It localises to the filopodium membrane. This protein is associated with nerve growth. It is a major component of the motile 'growth cones' that form the tips of elongating axons. Plays a role in axonal and dendritic filopodia induction. The sequence is that of Neuromodulin (gap43) from Xenopus laevis (African clawed frog).